A 466-amino-acid chain; its full sequence is Cysteine--tRNA ligase (466 aa).

Cys27 provides a ligand contact to Zn(2+). The 'HIGH' region motif lies at 29-39 (PTVYDDAHLGH). Residues Cys208, His238, and Glu242 each contribute to the Zn(2+) site. The 'KMSKS' region motif lies at 270–274 (KMSKS). Residue Lys273 coordinates ATP.

This sequence belongs to the class-I aminoacyl-tRNA synthetase family. In terms of assembly, monomer. It depends on Zn(2+) as a cofactor.

It localises to the cytoplasm. The catalysed reaction is tRNA(Cys) + L-cysteine + ATP = L-cysteinyl-tRNA(Cys) + AMP + diphosphate. The sequence is that of Cysteine--tRNA ligase from Sulfurimonas denitrificans (strain ATCC 33889 / DSM 1251) (Thiomicrospira denitrificans (strain ATCC 33889 / DSM 1251)).